Reading from the N-terminus, the 339-residue chain is RNA polymerase II holoenzyme cyclin-like subunit (339 aa).

Residues Pro-48–Arg-67 are disordered. Positions Asn-49 to Asn-60 are enriched in low complexity. The region spanning Arg-93 to Ile-194 is the Cyclin N-terminal domain.

It belongs to the cyclin family. Cyclin C subfamily. As to quaternary structure, component of the SRB8-11 complex, a regulatory module of the Mediator complex.

Its subcellular location is the nucleus. Component of the SRB8-11 complex. The SRB8-11 complex is a regulatory module of the Mediator complex which is itself involved in regulation of basal and activated RNA polymerase II-dependent transcription. The SRB8-11 complex may be involved in the transcriptional repression of a subset of genes regulated by Mediator. It may inhibit the association of the Mediator complex with RNA polymerase II to form the holoenzyme complex. The SRB8-11 complex phosphorylates the C-terminal domain (CTD) of the largest subunit of RNA polymerase II. The protein is RNA polymerase II holoenzyme cyclin-like subunit (SSN8) of Candida glabrata (strain ATCC 2001 / BCRC 20586 / JCM 3761 / NBRC 0622 / NRRL Y-65 / CBS 138) (Yeast).